A 456-amino-acid chain; its full sequence is Bifunctional protein GlmU (456 aa).

The segment at 1 to 229 (MTKKALSAVI…VMEVEGANNR (229 aa)) is pyrophosphorylase. UDP-N-acetyl-alpha-D-glucosamine is bound by residues 11–14 (LAAG), Lys25, Gln76, 81–82 (GT), 103–105 (YGD), Gly140, Glu154, Asn169, and Asn227. Mg(2+) is bound at residue Asp105. Asn227 lines the Mg(2+) pocket. The segment at 230–250 (LQLAALERYFQNKQASKLLLE) is linker. An N-acetyltransferase region spans residues 251–456 (GVMIYDPARF…QGWQRPIKKK (206 aa)). UDP-N-acetyl-alpha-D-glucosamine is bound by residues Arg333 and Lys351. His363 (proton acceptor) is an active-site residue. UDP-N-acetyl-alpha-D-glucosamine-binding residues include Tyr366 and Asn377. Acetyl-CoA-binding positions include Ala380, 386–387 (NY), Ser405, Ala423, and Arg440.

It in the N-terminal section; belongs to the N-acetylglucosamine-1-phosphate uridyltransferase family. This sequence in the C-terminal section; belongs to the transferase hexapeptide repeat family. Homotrimer. The cofactor is Mg(2+).

The protein resides in the cytoplasm. The enzyme catalyses alpha-D-glucosamine 1-phosphate + acetyl-CoA = N-acetyl-alpha-D-glucosamine 1-phosphate + CoA + H(+). It carries out the reaction N-acetyl-alpha-D-glucosamine 1-phosphate + UTP + H(+) = UDP-N-acetyl-alpha-D-glucosamine + diphosphate. It participates in nucleotide-sugar biosynthesis; UDP-N-acetyl-alpha-D-glucosamine biosynthesis; N-acetyl-alpha-D-glucosamine 1-phosphate from alpha-D-glucosamine 6-phosphate (route II): step 2/2. Its pathway is nucleotide-sugar biosynthesis; UDP-N-acetyl-alpha-D-glucosamine biosynthesis; UDP-N-acetyl-alpha-D-glucosamine from N-acetyl-alpha-D-glucosamine 1-phosphate: step 1/1. The protein operates within bacterial outer membrane biogenesis; LPS lipid A biosynthesis. Its function is as follows. Catalyzes the last two sequential reactions in the de novo biosynthetic pathway for UDP-N-acetylglucosamine (UDP-GlcNAc). The C-terminal domain catalyzes the transfer of acetyl group from acetyl coenzyme A to glucosamine-1-phosphate (GlcN-1-P) to produce N-acetylglucosamine-1-phosphate (GlcNAc-1-P), which is converted into UDP-GlcNAc by the transfer of uridine 5-monophosphate (from uridine 5-triphosphate), a reaction catalyzed by the N-terminal domain. This chain is Bifunctional protein GlmU, found in Haemophilus influenzae (strain 86-028NP).